Reading from the N-terminus, the 191-residue chain is Fe/S biogenesis protein NfuA (191 aa).

Positions 149 and 152 each coordinate [4Fe-4S] cluster.

Belongs to the NfuA family. As to quaternary structure, homodimer. It depends on [4Fe-4S] cluster as a cofactor.

Functionally, involved in iron-sulfur cluster biogenesis. Binds a 4Fe-4S cluster, can transfer this cluster to apoproteins, and thereby intervenes in the maturation of Fe/S proteins. Could also act as a scaffold/chaperone for damaged Fe/S proteins. The protein is Fe/S biogenesis protein NfuA of Yersinia enterocolitica serotype O:8 / biotype 1B (strain NCTC 13174 / 8081).